The primary structure comprises 384 residues: Calreticulin-3 (384 aa).

Residues 1–19 (MARALVQLWAICMLRVALA) form the signal peptide. The interval 20–197 (TVYFQEEFLD…GQSIESGSIE (178 aa)) is N-domain. A glycan (N-linked (GlcNAc...) asparagine) is linked at Asn-42. An intrachain disulfide couples Cys-105 to Cys-137. Residues Tyr-109, Lys-111, Tyr-128, and Asp-135 each coordinate an alpha-D-glucoside. 7 consecutive repeat copies span residues 191–202 (IESGSIEYDWNL), 208–219 (ETSPAESKDWEQ), 221–230 (KDNKAQDWEK), 234–245 (DASTSKQSDWNG), 249–259 (GDWPAPMLQKP), 263–271 (DGLKPEGIH), and 273–283 (DVWLHRKMKNT). Residues 191 to 245 (IESGSIEYDWNLTSLKKETSPAESKDWEQTKDNKAQDWEKHFLDASTSKQSDWNG) form a 4 X approximate repeats region. The segment at 198–294 (YDWNLTSLKK…YLTQYDLSEF (97 aa)) is P-domain. An N-linked (GlcNAc...) asparagine glycan is attached at Asn-201. Residues 249–283 (GDWPAPMLQKPPYQDGLKPEGIHKDVWLHRKMKNT) are 3 X approximate repeats. A C-domain region spans residues 295–384 (ENIGAIGLEL…FNQFHRRNEL (90 aa)). Glu-303 lines the an alpha-D-glucoside pocket. The Prevents secretion from ER motif lies at 381–384 (RNEL).

Belongs to the calreticulin family. As to quaternary structure, component of an EIF2 complex at least composed of CELF1/CUGBP1, CALR, CALR3, EIF2S1, EIF2S2, HSP90B1 and HSPA5. As to expression, testis specific.

It localises to the endoplasmic reticulum lumen. Its function is as follows. During spermatogenesis, may act as a lectin-independent chaperone for specific client proteins such as ADAM3. Required for sperm fertility. CALR3 capacity for calcium-binding may be absent or much lower than that of CALR. In Homo sapiens (Human), this protein is Calreticulin-3 (CALR3).